The sequence spans 609 residues: Replication factor A protein 1 (609 aa).

Over residues 130–152 (QNEQNNASAPRTGISTSTNSFYG) the composition is skewed to polar residues. Residues 130–166 (QNEQNNASAPRTGISTSTNSFYGNNAAATAPAPPPMM) are disordered. A DNA-binding region (OB) is located at residues 192 to 278 (WTIRARVTNK…NEYELMFERD (87 aa)). Residues 477–498 (CPAADCNKKVFDQGGSWRCEKC) form a C4-type zinc finger.

Belongs to the replication factor A protein 1 family. As to quaternary structure, component of the heterotrimeric canonical replication protein A complex (RPA).

The protein resides in the nucleus. As part of the replication protein A (RPA/RP-A), a single-stranded DNA-binding heterotrimeric complex, may play an essential role in DNA replication, recombination and repair. Binds and stabilizes single-stranded DNA intermediates, preventing complementary DNA reannealing and recruiting different proteins involved in DNA metabolism. In Schizosaccharomyces pombe (strain 972 / ATCC 24843) (Fission yeast), this protein is Replication factor A protein 1 (ssb1).